The primary structure comprises 261 residues: MGYLNNVTGYREDLLANRAIVKHGNFALLTPDGLVKNIIPGFENCDATILSTPKLGASFVDYLVTLHQNGGNQQGFGGEGIETFLYVISGNITAKAEGKTFALSEGGYLYCPPGSLMTFVNAQAEDSQIFLYKRRYVPVEGYAPWLVSGNASELERIHYEGMDDVILLDFLPKELGFDMNMHILSFAPGASHGYIETHVQEHGAYILSGQGVYNLDNNWIPVKKGDYIFMGAYSLQAGYGVGRGEAFSYIYSKDCNRDVEI.

The Cupin type-2 domain maps to 184-230; that stretch reads LSFAPGASHGYIETHVQEHGAYILSGQGVYNLDNNWIPVKKGDYIFM. Positions 196, 198, 202, and 236 each coordinate Mn(2+). Glu196 lines the substrate pocket. The substrate site is built by Gln236, Tyr249, and Lys253.

The protein belongs to the UGHY family. In terms of assembly, monomer. Requires Mn(2+) as cofactor.

The protein resides in the cytoplasm. The catalysed reaction is (S)-2-ureidoglycine + H2O = (S)-ureidoglycolate + NH4(+). In terms of biological role, involved in the anaerobic nitrogen utilization via the assimilation of allantoin. Catalyzes the second stereospecific hydrolysis reaction (deamination) of the allantoin degradation pathway, producing S-ureidoglycolate and ammonia from S-ureidoglycine. The sequence is that of (S)-ureidoglycine aminohydrolase (allE) from Escherichia coli (strain K12).